The primary structure comprises 225 residues: Cytochrome c oxidase subunit 2 (225 aa).

Topologically, residues 1 to 25 (MSTWFMFMFQESNSYYADNLISFHN) are mitochondrial intermembrane. A helical membrane pass occupies residues 26 to 47 (MVMMIIIMISTLTVYIILDLFM). The Mitochondrial matrix segment spans residues 48-62 (NKFSNLFLLKNHNIE). Residues 63–82 (IIWTIIPIIILLIICFPSLK) traverse the membrane as a helical segment. The Mitochondrial intermembrane portion of the chain corresponds to 83-225 (ILYLIDEIVN…YFLNWVNKQI (143 aa)). Residues histidine 159, cysteine 194, glutamate 196, cysteine 198, histidine 202, and methionine 205 each contribute to the Cu cation site. Residue glutamate 196 participates in Mg(2+) binding.

It belongs to the cytochrome c oxidase subunit 2 family. In terms of assembly, component of the cytochrome c oxidase (complex IV, CIV), a multisubunit enzyme composed of a catalytic core of 3 subunits and several supernumerary subunits. The complex exists as a monomer or a dimer and forms supercomplexes (SCs) in the inner mitochondrial membrane with ubiquinol-cytochrome c oxidoreductase (cytochrome b-c1 complex, complex III, CIII). Cu cation is required as a cofactor.

The protein localises to the mitochondrion inner membrane. It carries out the reaction 4 Fe(II)-[cytochrome c] + O2 + 8 H(+)(in) = 4 Fe(III)-[cytochrome c] + 2 H2O + 4 H(+)(out). In terms of biological role, component of the cytochrome c oxidase, the last enzyme in the mitochondrial electron transport chain which drives oxidative phosphorylation. The respiratory chain contains 3 multisubunit complexes succinate dehydrogenase (complex II, CII), ubiquinol-cytochrome c oxidoreductase (cytochrome b-c1 complex, complex III, CIII) and cytochrome c oxidase (complex IV, CIV), that cooperate to transfer electrons derived from NADH and succinate to molecular oxygen, creating an electrochemical gradient over the inner membrane that drives transmembrane transport and the ATP synthase. Cytochrome c oxidase is the component of the respiratory chain that catalyzes the reduction of oxygen to water. Electrons originating from reduced cytochrome c in the intermembrane space (IMS) are transferred via the dinuclear copper A center (CU(A)) of subunit 2 and heme A of subunit 1 to the active site in subunit 1, a binuclear center (BNC) formed by heme A3 and copper B (CU(B)). The BNC reduces molecular oxygen to 2 water molecules using 4 electrons from cytochrome c in the IMS and 4 protons from the mitochondrial matrix. The sequence is that of Cytochrome c oxidase subunit 2 (COII) from Apis mellifera ligustica (Common honeybee).